The sequence spans 288 residues: Adenylate kinase (288 aa).

ATP is bound at residue 65 to 70; it reads GVGKGT. The interval 85–114 is NMP; the sequence is ATGDLVRDELKSSGPLSKQLAEIVNQGKLV. AMP contacts are provided by residues T86, R91, 112–114, 142–145, and Q149; these read KLV and GFPR. An LID region spans residues 178–226; the sequence is GRRICSECGKNFNVASIDVAGENGAPRISMARLNPPFTVCFKLITRADD. R179 serves as a coordination point for ATP. AMP is bound by residues R223 and R234. G262 is a binding site for ATP.

Belongs to the adenylate kinase family. In terms of assembly, monomer.

It is found in the cytoplasm. It catalyses the reaction AMP + ATP = 2 ADP. Its function is as follows. Catalyzes the reversible transfer of the terminal phosphate group between ATP and AMP. Plays an important role in cellular energy homeostasis and in adenine nucleotide metabolism. This is Adenylate kinase (ADK) from Solanum tuberosum (Potato).